We begin with the raw amino-acid sequence, 533 residues long: Beta-glucosidase 10 (533 aa).

The first 23 residues, 1–23 (MAVAGAMVMSGGVLLLLLAFTCA), serve as a signal peptide directing secretion. Glutamine 53 is a binding site for a beta-D-glucoside. Residue asparagine 122 is glycosylated (N-linked (GlcNAc...) asparagine). A beta-D-glucoside contacts are provided by residues histidine 157 and 202-203 (NE). The Proton donor role is filled by glutamate 203. A disulfide bridge links cysteine 222 with cysteine 230. Tyrosine 369 lines the a beta-D-glucoside pocket. The N-linked (GlcNAc...) asparagine glycan is linked to asparagine 384. Glutamate 440 contributes to the a beta-D-glucoside binding site. Catalysis depends on glutamate 440, which acts as the Nucleophile. The N-linked (GlcNAc...) asparagine glycan is linked to asparagine 448. A beta-D-glucoside is bound by residues tryptophan 489, 496-497 (EW), and phenylalanine 505.

This sequence belongs to the glycosyl hydrolase 1 family.

The catalysed reaction is Hydrolysis of terminal, non-reducing beta-D-glucosyl residues with release of beta-D-glucose.. This chain is Beta-glucosidase 10 (BGLU10), found in Oryza sativa subsp. japonica (Rice).